A 980-amino-acid polypeptide reads, in one-letter code: Conserved oligomeric Golgi complex subunit 1 (980 aa).

Ala-2 bears the N-acetylalanine mark. Ser-7 bears the Phosphoserine mark. Position 598 is an N6-acetyllysine (Lys-598). Positions 923–934 (RATSRSVETQAQ) are enriched in polar residues. Residues 923–950 (RATSRSVETQAQVGPPALSRVGDPTTHP) are disordered.

It belongs to the COG1 family. As to quaternary structure, component of the conserved oligomeric Golgi complex which is composed of eight different subunits and is required for normal Golgi morphology and localization.

It is found in the golgi apparatus membrane. Required for normal Golgi function. The sequence is that of Conserved oligomeric Golgi complex subunit 1 (Cog1) from Mus musculus (Mouse).